Reading from the N-terminus, the 73-residue chain is Bacterioferritin-associated ferredoxin (73 aa).

2 residues coordinate [2Fe-2S] cluster: Cys-4 and Cys-6. Phosphate is bound by residues Arg-26 and Arg-29. Positions 38 and 41 each coordinate [2Fe-2S] cluster. Lys-46 serves as a coordination point for phosphate.

It belongs to the Bfd family. As to quaternary structure, monomer. Interacts with BfrB; up to 12 Bfd proteins can bind to the BfrB bacterioferritin complex (BFR). One Bfd protein binds to a BfrB dimer in the BFR, with the [2Fe-2S] cluster positioned about 22 Angstroms above the heme of BfrB. Does not interact with FtnA. It depends on [2Fe-2S] cluster as a cofactor. Requires phosphate as cofactor.

Required for mobilization of iron from the bacterioferritin (BFR) complex, composed of BfrB and FtnA in varying proportions; mobilization requires the [2Fe-2S] cluster of this protein. Reduction of the BfrB heme group occurs in the presence of Bfd, strongly suggesting that the BfrB-Bfd complex allows heme to mediate electron transfer from FPR to the Fe(3+) iron core in the BFR prior to its release as Fe(2+). This is Bacterioferritin-associated ferredoxin from Pseudomonas aeruginosa (strain ATCC 15692 / DSM 22644 / CIP 104116 / JCM 14847 / LMG 12228 / 1C / PRS 101 / PAO1).